The chain runs to 155 residues: Ribosomal RNA large subunit methyltransferase H (155 aa).

S-adenosyl-L-methionine is bound by residues leucine 73, glycine 104, and 123–128 (LSPLTL).

Belongs to the RNA methyltransferase RlmH family. In terms of assembly, homodimer.

Its subcellular location is the cytoplasm. The catalysed reaction is pseudouridine(1915) in 23S rRNA + S-adenosyl-L-methionine = N(3)-methylpseudouridine(1915) in 23S rRNA + S-adenosyl-L-homocysteine + H(+). Its function is as follows. Specifically methylates the pseudouridine at position 1915 (m3Psi1915) in 23S rRNA. In Ectopseudomonas mendocina (strain ymp) (Pseudomonas mendocina), this protein is Ribosomal RNA large subunit methyltransferase H.